The chain runs to 76 residues: Small ribosomal subunit protein bS18 (76 aa).

This sequence belongs to the bacterial ribosomal protein bS18 family. In terms of assembly, part of the 30S ribosomal subunit. Forms a tight heterodimer with protein bS6.

Functionally, binds as a heterodimer with protein bS6 to the central domain of the 16S rRNA, where it helps stabilize the platform of the 30S subunit. The sequence is that of Small ribosomal subunit protein bS18 from Alcanivorax borkumensis (strain ATCC 700651 / DSM 11573 / NCIMB 13689 / SK2).